We begin with the raw amino-acid sequence, 97 residues long: Large ribosomal subunit protein bL27 (97 aa).

The propeptide occupies 1 to 12 (MLKMTLNNLQLF). A disordered region spans residues 13–37 (AHKKGGGSTSNGRDSQAKRLGAKAA).

This sequence belongs to the bacterial ribosomal protein bL27 family. Post-translationally, the N-terminus is cleaved by ribosomal processing cysteine protease Prp.

This chain is Large ribosomal subunit protein bL27, found in Streptococcus pneumoniae serotype 2 (strain D39 / NCTC 7466).